The chain runs to 84 residues: Small ribosomal subunit protein uS17 (84 aa).

Belongs to the universal ribosomal protein uS17 family. In terms of assembly, part of the 30S ribosomal subunit.

Its function is as follows. One of the primary rRNA binding proteins, it binds specifically to the 5'-end of 16S ribosomal RNA. The protein is Small ribosomal subunit protein uS17 of Treponema pallidum (strain Nichols).